The following is a 149-amino-acid chain: Putative sugar phosphate isomerase YwlF (149 aa).

H9 lines the substrate pocket. Residue C66 is the Proton acceptor of the active site. 67 to 72 serves as a coordination point for substrate; it reads GTGIGM. H99 acts as the Proton donor in catalysis. R133 provides a ligand contact to substrate.

This sequence belongs to the LacAB/RpiB family.

The polypeptide is Putative sugar phosphate isomerase YwlF (ywlF) (Bacillus subtilis (strain 168)).